A 291-amino-acid chain; its full sequence is Tyrosine recombinase XerA (291 aa).

Residues 9 to 102 (PESGDLYNAF…AVRRFLKWIN (94 aa)) enclose the Core-binding (CB) domain. Residues 115 to 279 (KEVKALDEIQ…VLDDLRNEYL (165 aa)) enclose the Tyr recombinase domain. Catalysis depends on residues R150, K175, H231, R234, and H257. Y266 acts as the O-(3'-phospho-DNA)-tyrosine intermediate in catalysis.

This sequence belongs to the 'phage' integrase family. XerA subfamily.

The protein resides in the cytoplasm. Site-specific tyrosine recombinase, which acts by catalyzing the cutting and rejoining of the recombining DNA molecules. Probably involved in the resolution of chromosome dimers. Binds to the dif site. The sequence is that of Tyrosine recombinase XerA from Saccharolobus solfataricus (strain ATCC 35092 / DSM 1617 / JCM 11322 / P2) (Sulfolobus solfataricus).